The following is a 290-amino-acid chain: Succinate dehydrogenase [ubiquinone] iron-sulfur subunit, mitochondrial (290 aa).

Residues 1–38 (MAAAVVGVSLRRGVPARFLRAGLRPVRGLEAVHGICRG) constitute a mitochondrion transit peptide. In terms of domain architecture, 2Fe-2S ferredoxin-type spans 50–143 (KKFSIYRWDP…TTKIYPLPHM (94 aa)). The [2Fe-2S] cluster site is built by Cys103, Cys108, Cys111, and Cys123. The 31-residue stretch at 186 to 216 (DRQKLDGLYECILCACCSTSCPSYWWNGDKY) folds into the 4Fe-4S ferredoxin-type domain. [4Fe-4S] cluster contacts are provided by Cys196, Cys199, and Cys202. Cys206 serves as a coordination point for [3Fe-4S] cluster. Trp211 provides a ligand contact to a ubiquinone. Cys253 and Cys259 together coordinate [3Fe-4S] cluster. Cys263 is a binding site for [4Fe-4S] cluster.

It belongs to the succinate dehydrogenase/fumarate reductase iron-sulfur protein family. Component of complex II composed of four subunits: the flavoprotein (FP) SDHA, iron-sulfur protein (IP) SDHB, and a cytochrome b560 composed of SDHC and SDHD. Requires [2Fe-2S] cluster as cofactor. [3Fe-4S] cluster is required as a cofactor. The cofactor is [4Fe-4S] cluster.

The protein localises to the mitochondrion inner membrane. It catalyses the reaction a quinone + succinate = fumarate + a quinol. The enzyme catalyses (R)-malate + a quinone = enol-oxaloacetate + a quinol. The catalysed reaction is (S)-malate + a quinone = enol-oxaloacetate + a quinol. It functions in the pathway carbohydrate metabolism; tricarboxylic acid cycle; fumarate from succinate (eukaryal route): step 1/1. Its activity is regulated as follows. Enol-oxaloacetate inhibits the succinate dehydrogenase activity. Its function is as follows. Iron-sulfur protein (IP) subunit of the succinate dehydrogenase complex (mitochondrial respiratory chain complex II), responsible for transferring electrons from succinate to ubiquinone (coenzyme Q). SDH also oxidizes malate to the non-canonical enol form of oxaloacetate, enol-oxaloacetate. Enol-oxaloacetate, which is a potent inhibitor of the succinate dehydrogenase activity, is further isomerized into keto-oxaloacetate. The sequence is that of Succinate dehydrogenase [ubiquinone] iron-sulfur subunit, mitochondrial (SDHB) from Gallus gallus (Chicken).